The following is a 1488-amino-acid chain: Chromosome partition protein MukB (1488 aa).

34–41 serves as a coordination point for ATP; the sequence is GGNGAGKS. Coiled-coil stretches lie at residues 326-418, 444-472, and 509-602; these read LEAD…QYNQ, LDTF…QTAH, and RHLA…RRAP. The segment at 666-783 is flexible hinge; it reads PGGAEDQRLN…SLPIFGRAAR (118 aa). Coiled coils occupy residues 835 to 923, 977 to 1116, and 1209 to 1265; these read EAEI…AKLE, EMLS…AKAG, and VEAI…LQSV. Residues 1049-1074 form a disordered region; the sequence is ADSGAEERARQRRDELHAQLSNNRSR. A compositionally biased stretch (basic and acidic residues) spans 1051-1065; sequence SGAEERARQRRDELH.

Belongs to the SMC family. MukB subfamily. In terms of assembly, homodimerization via its hinge domain. Binds to DNA via its C-terminal region. Interacts, and probably forms a ternary complex, with MukE and MukF via its C-terminal region. The complex formation is stimulated by calcium or magnesium. Interacts with tubulin-related protein FtsZ.

It is found in the cytoplasm. The protein localises to the nucleoid. Plays a central role in chromosome condensation, segregation and cell cycle progression. Functions as a homodimer, which is essential for chromosome partition. Involved in negative DNA supercoiling in vivo, and by this means organize and compact chromosomes. May achieve or facilitate chromosome segregation by condensation DNA from both sides of a centrally located replisome during cell division. The chain is Chromosome partition protein MukB from Salmonella heidelberg (strain SL476).